The chain runs to 289 residues: MPSLKDLKNRIGSVKNTRKITKAMQMVAAAKLRRAQEAAEAARPFAERMTAVMTGLAGSVGSSESAPRLLAGTGSDKVHLLVVMTAERGLCGGFNSSIVRLARAHAAKLLTQGKTVKILTVGKKGREQLRRDLGQHFIGHVDLSEVKRMGYPVAQGIARDLLDRFDKGEFDVATIFFARFQSVINQVPTAQQVIPAVFEGEGEVSSLYDYEPSEEGVLADLLPRGVATQIFTALLENGASEQGARMSAMDNATRNAGDMINRLTIEYNRSRQAAITKELIEIISGAEAL.

Belongs to the ATPase gamma chain family. F-type ATPases have 2 components, CF(1) - the catalytic core - and CF(0) - the membrane proton channel. CF(1) has five subunits: alpha(3), beta(3), gamma(1), delta(1), epsilon(1). CF(0) has three main subunits: a, b and c.

The protein resides in the cell inner membrane. In terms of biological role, produces ATP from ADP in the presence of a proton gradient across the membrane. The gamma chain is believed to be important in regulating ATPase activity and the flow of protons through the CF(0) complex. The chain is ATP synthase gamma chain from Cereibacter sphaeroides (strain ATCC 17023 / DSM 158 / JCM 6121 / CCUG 31486 / LMG 2827 / NBRC 12203 / NCIMB 8253 / ATH 2.4.1.) (Rhodobacter sphaeroides).